A 156-amino-acid polypeptide reads, in one-letter code: Small ribosomal subunit protein uS7 (156 aa).

The protein belongs to the universal ribosomal protein uS7 family. As to quaternary structure, part of the 30S ribosomal subunit. Contacts proteins S9 and S11.

Its function is as follows. One of the primary rRNA binding proteins, it binds directly to 16S rRNA where it nucleates assembly of the head domain of the 30S subunit. Is located at the subunit interface close to the decoding center, probably blocks exit of the E-site tRNA. The protein is Small ribosomal subunit protein uS7 of Aliivibrio fischeri (strain MJ11) (Vibrio fischeri).